The primary structure comprises 543 residues: Splicing factor U2af large subunit B (543 aa).

Gly residues predominate over residues 1–10 (MADDNGGGGD). The interval 1 to 171 (MADDNGGGGD…IPTPSQLPGS (171 aa)) is disordered. Basic and acidic residues-rich tracts occupy residues 17 to 78 (VRPE…DRDR) and 88 to 114 (EHRD…ERDG). Basic residues predominate over residues 115–126 (HRRHRSRSRSRS). RRM domains are found at residues 207–290 (RRVY…RPTD), 327–405 (DRIF…RANQ), and 446–532 (QVVT…YPEN).

The protein belongs to the splicing factor SR family.

It is found in the nucleus. In terms of biological role, necessary for the splicing of pre-mRNA. In Triticum aestivum (Wheat), this protein is Splicing factor U2af large subunit B (U2AF65B).